Consider the following 216-residue polypeptide: Imidazole glycerol phosphate synthase subunit HisH (216 aa).

The Glutamine amidotransferase type-1 domain maps to 2–216 (RVAIIDYGSG…LISNFLRWKP (215 aa)). The active-site Nucleophile is C88. Catalysis depends on residues H196 and E198.

In terms of assembly, heterodimer of HisH and HisF.

The protein localises to the cytoplasm. It carries out the reaction 5-[(5-phospho-1-deoxy-D-ribulos-1-ylimino)methylamino]-1-(5-phospho-beta-D-ribosyl)imidazole-4-carboxamide + L-glutamine = D-erythro-1-(imidazol-4-yl)glycerol 3-phosphate + 5-amino-1-(5-phospho-beta-D-ribosyl)imidazole-4-carboxamide + L-glutamate + H(+). The enzyme catalyses L-glutamine + H2O = L-glutamate + NH4(+). The protein operates within amino-acid biosynthesis; L-histidine biosynthesis; L-histidine from 5-phospho-alpha-D-ribose 1-diphosphate: step 5/9. In terms of biological role, IGPS catalyzes the conversion of PRFAR and glutamine to IGP, AICAR and glutamate. The HisH subunit catalyzes the hydrolysis of glutamine to glutamate and ammonia as part of the synthesis of IGP and AICAR. The resulting ammonia molecule is channeled to the active site of HisF. The sequence is that of Imidazole glycerol phosphate synthase subunit HisH from Agrobacterium fabrum (strain C58 / ATCC 33970) (Agrobacterium tumefaciens (strain C58)).